The primary structure comprises 265 residues: 3'(2'),5'-bisphosphate nucleotidase CysQ (265 aa).

Mg(2+)-binding residues include Glu-80, Asp-99, Leu-101, Asp-102, and Asp-222. Glu-80 is a substrate binding site. Substrate contacts are provided by residues 101-104 and Asp-222; that span reads LDGT.

The protein belongs to the inositol monophosphatase superfamily. CysQ family. The cofactor is Mg(2+).

Its subcellular location is the cell inner membrane. It catalyses the reaction adenosine 3',5'-bisphosphate + H2O = AMP + phosphate. In terms of biological role, converts adenosine-3',5'-bisphosphate (PAP) to AMP. This is 3'(2'),5'-bisphosphate nucleotidase CysQ from Buchnera aphidicola subsp. Acyrthosiphon pisum (strain APS) (Acyrthosiphon pisum symbiotic bacterium).